The primary structure comprises 79 residues: Putative defensin-like protein 203 (79 aa).

Residues Met1 to Ala27 form the signal peptide. 4 disulfides stabilise this stretch: Cys30–Cys79, Cys40–Cys64, Cys49–Cys73, and Cys53–Cys75.

Belongs to the DEFL family.

It is found in the secreted. The chain is Putative defensin-like protein 203 from Arabidopsis thaliana (Mouse-ear cress).